We begin with the raw amino-acid sequence, 490 residues long: Glutamyl-tRNA(Gln) amidotransferase subunit A (490 aa).

Residues K76 and S151 each act as charge relay system in the active site. S175 serves as the catalytic Acyl-ester intermediate.

The protein belongs to the amidase family. GatA subfamily. As to quaternary structure, heterotrimer of A, B and C subunits.

The catalysed reaction is L-glutamyl-tRNA(Gln) + L-glutamine + ATP + H2O = L-glutaminyl-tRNA(Gln) + L-glutamate + ADP + phosphate + H(+). Functionally, allows the formation of correctly charged Gln-tRNA(Gln) through the transamidation of misacylated Glu-tRNA(Gln) in organisms which lack glutaminyl-tRNA synthetase. The reaction takes place in the presence of glutamine and ATP through an activated gamma-phospho-Glu-tRNA(Gln). The sequence is that of Glutamyl-tRNA(Gln) amidotransferase subunit A from Aromatoleum aromaticum (strain DSM 19018 / LMG 30748 / EbN1) (Azoarcus sp. (strain EbN1)).